Consider the following 457-residue polypeptide: Aromatic amino acid transport protein AroP (457 aa).

Residues 1-19 lie on the Cytoplasmic side of the membrane; the sequence is MMEGQQHGEQLKRGLKNRH. A helical transmembrane segment spans residues 20 to 40; the sequence is IQLIALGGAIGTGLFLGSASV. The Periplasmic portion of the chain corresponds to 41 to 42; the sequence is IQ. The chain crosses the membrane as a helical span at residues 43–63; that stretch reads SAGPGIILGYAIAGFIAFLIM. Residues 64–86 lie on the Cytoplasmic side of the membrane; the sequence is RQLGEMVVEEPVAGSFSHFAYKY. The helical transmembrane segment at 87–107 threads the bilayer; it reads WGSFAGFASGWNYWVLYVLVA. The Periplasmic portion of the chain corresponds to 108-117; that stretch reads MAELTAVGKY. A helical membrane pass occupies residues 118-138; the sequence is IQFWYPEIPTWVSAAVFFVVI. The Cytoplasmic segment spans residues 139 to 155; that stretch reads NAINLTNVKVFGEMEFW. The chain crosses the membrane as a helical span at residues 156-176; the sequence is FAIIKVIAVVAMIIFGGWLLF. The Periplasmic portion of the chain corresponds to 177 to 201; it reads SGNGGPQASVSNLWDQGGFLPHGFT. Residues 202–222 form a helical membrane-spanning segment; it reads GLVMMMAIIMFSFGGLELVGI. Residues 223 to 240 lie on the Cytoplasmic side of the membrane; it reads TAAEADNPEQSIPKATNQ. The helical transmembrane segment at 241-261 threads the bilayer; that stretch reads VIYRILIFYIGSLAVLLSLMP. Residues 262-271 lie on the Periplasmic side of the membrane; that stretch reads WTRVTADTSP. A helical transmembrane segment spans residues 272 to 292; the sequence is FVLIFHELGDTFVANALNIVV. The Cytoplasmic segment spans residues 293 to 333; sequence LTAALSVYNSCVYCNSRMLFGLAQQGNAPKALASVDKRGVP. The helical transmembrane segment at 334 to 354 threads the bilayer; it reads VNTILVSALVTALCVLINYLA. Topologically, residues 355-358 are periplasmic; that stretch reads PESA. Residues 359–379 form a helical membrane-spanning segment; sequence FGLLMALVVSALVINWAMISL. At 380–399 the chain is on the cytoplasmic side; sequence AHMKFRRAKQEQGVVTRFPA. A helical transmembrane segment spans residues 400 to 420; that stretch reads LLYPLGNWICLLFMAAVLVIM. The Periplasmic segment spans residues 421–425; it reads LMTPG. A helical membrane pass occupies residues 426-446; the sequence is MAISVYLIPVWLIVLGIGYLF. The Cytoplasmic segment spans residues 447 to 457; that stretch reads KEKTAKAVKAH.

Belongs to the amino acid-polyamine-organocation (APC) superfamily. Amino acid transporter (AAT) (TC 2.A.3.1) family.

The protein localises to the cell inner membrane. It carries out the reaction L-phenylalanine(in) + H(+)(in) = L-phenylalanine(out) + H(+)(out). The enzyme catalyses L-tryptophan(in) + H(+)(in) = L-tryptophan(out) + H(+)(out). It catalyses the reaction L-tyrosine(in) + H(+)(in) = L-tyrosine(out) + H(+)(out). Permease that is involved in the active transport across the cytoplasmic membrane of all three aromatic amino acids, phenylalanine, tyrosine and tryptophan. In Shigella flexneri, this protein is Aromatic amino acid transport protein AroP (aroP).